Reading from the N-terminus, the 449-residue chain is Xylose isomerase (449 aa).

Catalysis depends on residues His103 and Asp106. 7 residues coordinate Mg(2+): Glu234, Glu270, His273, Asp298, Asp309, Asp311, and Asp342.

Belongs to the xylose isomerase family. In terms of assembly, homotetramer. The cofactor is Mg(2+).

It localises to the cytoplasm. It carries out the reaction alpha-D-xylose = alpha-D-xylulofuranose. In terms of biological role, involved in D-xylose catabolism. The chain is Xylose isomerase (xylA) from Lactiplantibacillus pentosus (Lactobacillus pentosus).